A 136-amino-acid chain; its full sequence is MATFHFDLVSPEKIAFSGEVEQVDVPGVEGDFGVLAGHSPLVASVRPGILTVTIGGKHEKIIVLGGLAEVSEKGLTVLADTATSLADLDRAAFARQIEEMESNLKNEEPGNELDKAIARLDHFKVIQQHITSTGMH.

Belongs to the ATPase epsilon chain family. As to quaternary structure, F-type ATPases have 2 components, CF(1) - the catalytic core - and CF(0) - the membrane proton channel. CF(1) has five subunits: alpha(3), beta(3), gamma(1), delta(1), epsilon(1). CF(0) has three main subunits: a, b and c.

The protein localises to the cell inner membrane. In terms of biological role, produces ATP from ADP in the presence of a proton gradient across the membrane. This is ATP synthase epsilon chain from Afipia carboxidovorans (strain ATCC 49405 / DSM 1227 / KCTC 32145 / OM5) (Oligotropha carboxidovorans).